Consider the following 568-residue polypeptide: Archaeosine synthase subunit alpha (568 aa).

Positions 496–565 (YDALKSYWVK…AKKGVAVKVR (70 aa)) constitute a PUA domain.

Belongs to the archaeosine synthase type 1 family. In terms of assembly, forms a robust complex with the archaeosine synthase beta subunit RaSEA, likely an alpha(2)beta(2) heterotetrameric structure. Formation of this complex highly increases lysine transfer activity.

It catalyses the reaction 7-cyano-7-carbaguanosine(15) in tRNA + L-lysine = 7-N-[(5S)-5-amino-5-carboxypentyl]formamidino-7-deazaguanosine(15) in tRNA. It functions in the pathway tRNA modification; archaeosine-tRNA biosynthesis. Its function is as follows. Functions in the biosynthesis of archaeosine, a modified nucleoside present in the dihydrouridine loop (D-loop) of archaeal tRNAs. Catalyzes the addition of L-lysine to the cyano group of 7-cyano-7-deazaguanine (preQ0)-modified tRNAs at position 15, to generate q0kN15-tRNA, a q0N lysine adduct identified as 7-N-[(5S)-5-amino-5-carboxypentyl]formamidino-7-deazaguanosine. The sequence is that of Archaeosine synthase subunit alpha from Thermococcus kodakarensis (strain ATCC BAA-918 / JCM 12380 / KOD1) (Pyrococcus kodakaraensis (strain KOD1)).